The chain runs to 645 residues: Putative palmitoyltransferase ZDHHC13 (645 aa).

Residues 1 to 73 (MDWSEGDGSH…KSSHPEDSSS (73 aa)) are disordered. Over 1–314 (MDWSEGDGSH…ACLKLLNRYK (314 aa)) the chain is Cytoplasmic. Over residues 7 to 20 (DGSHSHGHMGDSCH) the composition is skewed to basic and acidic residues. Over residues 23–33 (GGGHSHGHGHS) the composition is skewed to basic residues. The segment covering 34–43 (HGGSGFGGFM) has biased composition (gly residues). 5 ANK repeats span residues 104–133 (ENVT…VIDQ), 138–167 (LNST…DPSL), 171–200 (EGYR…EVDL), 204–234 (NGQT…SVNA), and 239–268 (NRNS…SVDM). A helical transmembrane segment spans residues 315 to 335 (VCLQSVFSVVVVGAFGAILDM). Position 336 (arginine 336) is a topological domain, lumenal. Residues 337 to 357 (TESWLLKGILLACIMAVINLA) traverse the membrane as a helical segment. Residues 358–369 (SRQLATVAVRSL) lie on the Cytoplasmic side of the membrane. Residues 370–390 (IPSTGLIASVFWMVVTWVLWF) form a helical membrane-spanning segment. At 391-394 (LPDE) the chain is on the lumenal side. The chain crosses the membrane as a helical span at residues 395–415 (PSAAVQMLFTVNITAVLYYYI). Over 416–492 (RSCRTDPGHV…NGCIGARNHP (77 aa)) the chain is Cytoplasmic. Residues 449–499 (IFCTSCMMRKPMRANHCFSCNACVAKQDHHSIWINGCIGARNHPFFVLFLV) enclose the DHHC domain. The chain crosses the membrane as a helical span at residues 493 to 513 (FFVLFLVALNFLCIWMFYGSI). The Lumenal portion of the chain corresponds to 514–542 (TYWSRHCPLHYSEEGIWGALTALMGCSPW). The chain crosses the membrane as a helical span at residues 543–563 (LLYVFCFVFFHTTWASILLVL). The Cytoplasmic segment spans residues 564-645 (QLYQIAFLGL…RDMFSSPDAV (82 aa)).

It belongs to the DHHC palmitoyltransferase family. AKR/ZDHHC17 subfamily.

It is found in the golgi apparatus membrane. It localises to the cytoplasmic vesicle membrane. Putative palmitoyltransferase that could catalyze the addition of palmitate onto various protein substrates. In Danio rerio (Zebrafish), this protein is Putative palmitoyltransferase ZDHHC13.